The chain runs to 461 residues: ATP-dependent protease ATPase subunit HslU (461 aa).

ATP contacts are provided by residues Ile18 and 60–65; that span reads GVGKTE. Positions 157 to 178 are disordered; sequence EGSSVKPEPTAQQKESRQKMRK. ATP is bound by residues Asp273, Glu339, and Arg411.

Belongs to the ClpX chaperone family. HslU subfamily. As to quaternary structure, a double ring-shaped homohexamer of HslV is capped on each side by a ring-shaped HslU homohexamer. The assembly of the HslU/HslV complex is dependent on binding of ATP.

Its subcellular location is the cytoplasm. Functionally, ATPase subunit of a proteasome-like degradation complex; this subunit has chaperone activity. The binding of ATP and its subsequent hydrolysis by HslU are essential for unfolding of protein substrates subsequently hydrolyzed by HslV. HslU recognizes the N-terminal part of its protein substrates and unfolds these before they are guided to HslV for hydrolysis. The protein is ATP-dependent protease ATPase subunit HslU of Magnetococcus marinus (strain ATCC BAA-1437 / JCM 17883 / MC-1).